The chain runs to 308 residues: MFADSAVACVISALRAVGVDSPLMSELVPRLLFVHAHPDDETLTTGGTIAHYVRRGADVRVVTCTLGEEGEVIGEQYAQLAVDHADQLGGYRIAELTAALAALGVDAPHFLGGPGHWRDSGMADTPARHQPRFVDADMAEAAGLLAAILDDFRPHVVVTYDPDGGYGHPDHVQTHRVTTAAVERAQWQVPKFYWTVMSRSGMGDAFAVARDVPEEWLQVSVDDVPFLYTDDRIDAVVDVSDSIEAKVAAMRAHATQISVAANGQSCALSNNIAMPIPGVEHYVLVSGAPGPRDARGWETDLLAGVNLA.

Zn(2+) contacts are provided by His-37, Asp-40, and His-171.

It belongs to the MshB deacetylase family. Requires Zn(2+) as cofactor.

The catalysed reaction is 1D-myo-inositol 2-acetamido-2-deoxy-alpha-D-glucopyranoside + H2O = 1D-myo-inositol 2-amino-2-deoxy-alpha-D-glucopyranoside + acetate. In terms of biological role, catalyzes the deacetylation of 1D-myo-inositol 2-acetamido-2-deoxy-alpha-D-glucopyranoside (GlcNAc-Ins) in the mycothiol biosynthesis pathway. This chain is 1D-myo-inositol 2-acetamido-2-deoxy-alpha-D-glucopyranoside deacetylase, found in Mycobacterium sp. (strain KMS).